A 320-amino-acid chain; its full sequence is Acetyl-coenzyme A carboxylase carboxyl transferase subunit alpha (320 aa).

One can recognise a CoA carboxyltransferase C-terminal domain in the interval 41–295; the sequence is KIEEKAQQAL…GDAIAAAFAE (255 aa).

Belongs to the AccA family. Acetyl-CoA carboxylase is a heterohexamer composed of biotin carboxyl carrier protein (AccB), biotin carboxylase (AccC) and two subunits each of ACCase subunit alpha (AccA) and ACCase subunit beta (AccD).

The protein localises to the cytoplasm. The catalysed reaction is N(6)-carboxybiotinyl-L-lysyl-[protein] + acetyl-CoA = N(6)-biotinyl-L-lysyl-[protein] + malonyl-CoA. The protein operates within lipid metabolism; malonyl-CoA biosynthesis; malonyl-CoA from acetyl-CoA: step 1/1. Its function is as follows. Component of the acetyl coenzyme A carboxylase (ACC) complex. First, biotin carboxylase catalyzes the carboxylation of biotin on its carrier protein (BCCP) and then the CO(2) group is transferred by the carboxyltransferase to acetyl-CoA to form malonyl-CoA. The chain is Acetyl-coenzyme A carboxylase carboxyl transferase subunit alpha from Rhodopseudomonas palustris (strain ATCC BAA-98 / CGA009).